A 103-amino-acid chain; its full sequence is Small ribosomal subunit protein uS10 (103 aa).

Belongs to the universal ribosomal protein uS10 family. In terms of assembly, part of the 30S ribosomal subunit.

Involved in the binding of tRNA to the ribosomes. The sequence is that of Small ribosomal subunit protein uS10 from Escherichia coli O127:H6 (strain E2348/69 / EPEC).